Here is a 207-residue protein sequence, read N- to C-terminus: Small ribosomal subunit protein uS4 (207 aa).

Residues 96–156 enclose the S4 RNA-binding domain; sequence RRLDNVVYRL…EKFKTSSFIA (61 aa).

It belongs to the universal ribosomal protein uS4 family. As to quaternary structure, part of the 30S ribosomal subunit. Contacts protein S5. The interaction surface between S4 and S5 is involved in control of translational fidelity.

In terms of biological role, one of the primary rRNA binding proteins, it binds directly to 16S rRNA where it nucleates assembly of the body of the 30S subunit. Its function is as follows. With S5 and S12 plays an important role in translational accuracy. In Leptospira interrogans serogroup Icterohaemorrhagiae serovar copenhageni (strain Fiocruz L1-130), this protein is Small ribosomal subunit protein uS4.